The sequence spans 124 residues: Small ribosomal subunit protein uS12 (124 aa).

A 3-methylthioaspartic acid modification is found at aspartate 90.

The protein belongs to the universal ribosomal protein uS12 family. Part of the 30S ribosomal subunit. Contacts proteins S8 and S17. May interact with IF1 in the 30S initiation complex.

Its function is as follows. With S4 and S5 plays an important role in translational accuracy. Interacts with and stabilizes bases of the 16S rRNA that are involved in tRNA selection in the A site and with the mRNA backbone. Located at the interface of the 30S and 50S subunits, it traverses the body of the 30S subunit contacting proteins on the other side and probably holding the rRNA structure together. The combined cluster of proteins S8, S12 and S17 appears to hold together the shoulder and platform of the 30S subunit. The protein is Small ribosomal subunit protein uS12 of Wolbachia pipientis subsp. Culex pipiens (strain wPip).